The sequence spans 188 residues: MKTTKSFIIIWTFIGFLLNLLALFTPFELPLFDIADKTNTTYLRMGISFQVASNLFISCVSGATPAKYAQILYLIIGIFGEPLYMTGNSYDMTQDPSWGYVIGSFGASERAGEKAFEKKLSLLNILISSYSGLFVIHAYGAIGLLLHSKSWEHWKSYLIMYSLIPLPSQLVMIFLTSILAFLFRKILD.

The protein localises to the plastid. The protein resides in the cyanelle. This is an uncharacterized protein from Cyanophora paradoxa.